A 287-amino-acid polypeptide reads, in one-letter code: Phosphatidylserine decarboxylase proenzyme (287 aa).

Residues Asp90, His147, and Ser252 each act as charge relay system; for autoendoproteolytic cleavage activity in the active site. The active-site Schiff-base intermediate with substrate; via pyruvic acid; for decarboxylase activity is Ser252. Ser252 is subject to Pyruvic acid (Ser); by autocatalysis.

The protein belongs to the phosphatidylserine decarboxylase family. PSD-B subfamily. Prokaryotic type I sub-subfamily. As to quaternary structure, heterodimer of a large membrane-associated beta subunit and a small pyruvoyl-containing alpha subunit. Requires pyruvate as cofactor. Is synthesized initially as an inactive proenzyme. Formation of the active enzyme involves a self-maturation process in which the active site pyruvoyl group is generated from an internal serine residue via an autocatalytic post-translational modification. Two non-identical subunits are generated from the proenzyme in this reaction, and the pyruvate is formed at the N-terminus of the alpha chain, which is derived from the carboxyl end of the proenzyme. The autoendoproteolytic cleavage occurs by a canonical serine protease mechanism, in which the side chain hydroxyl group of the serine supplies its oxygen atom to form the C-terminus of the beta chain, while the remainder of the serine residue undergoes an oxidative deamination to produce ammonia and the pyruvoyl prosthetic group on the alpha chain. During this reaction, the Ser that is part of the protease active site of the proenzyme becomes the pyruvoyl prosthetic group, which constitutes an essential element of the active site of the mature decarboxylase.

The protein localises to the cell membrane. The catalysed reaction is a 1,2-diacyl-sn-glycero-3-phospho-L-serine + H(+) = a 1,2-diacyl-sn-glycero-3-phosphoethanolamine + CO2. Its pathway is phospholipid metabolism; phosphatidylethanolamine biosynthesis; phosphatidylethanolamine from CDP-diacylglycerol: step 2/2. Catalyzes the formation of phosphatidylethanolamine (PtdEtn) from phosphatidylserine (PtdSer). The polypeptide is Phosphatidylserine decarboxylase proenzyme (Pseudomonas putida (strain ATCC 47054 / DSM 6125 / CFBP 8728 / NCIMB 11950 / KT2440)).